The sequence spans 348 residues: 4-hydroxy-2-oxovalerate aldolase 1 (348 aa).

A Pyruvate carboxyltransferase domain is found at 8-260; that stretch reads ITVHDMTLRD…QTGVDVWAIQ (253 aa). 16–17 provides a ligand contact to substrate; it reads RD. Residue Asp17 participates in Mn(2+) binding. Residue His20 is the Proton acceptor of the active site. The substrate site is built by Ser170 and His199. Residues His199 and His201 each coordinate Mn(2+). Tyr290 contributes to the substrate binding site.

The protein belongs to the 4-hydroxy-2-oxovalerate aldolase family.

The enzyme catalyses (S)-4-hydroxy-2-oxopentanoate = acetaldehyde + pyruvate. This Cupriavidus metallidurans (strain ATCC 43123 / DSM 2839 / NBRC 102507 / CH34) (Ralstonia metallidurans) protein is 4-hydroxy-2-oxovalerate aldolase 1.